Here is a 216-residue protein sequence, read N- to C-terminus: 3,4-dihydroxy-2-butanone 4-phosphate synthase (216 aa).

D-ribulose 5-phosphate contacts are provided by residues 33 to 34 (RE), Asp-38, 146 to 150 (RRGHT), and Glu-170. Glu-34 serves as a coordination point for Mg(2+). His-149 contributes to the Mg(2+) binding site.

Belongs to the DHBP synthase family. As to quaternary structure, homodimer. The cofactor is Mg(2+). Mn(2+) serves as cofactor.

It carries out the reaction D-ribulose 5-phosphate = (2S)-2-hydroxy-3-oxobutyl phosphate + formate + H(+). The protein operates within cofactor biosynthesis; riboflavin biosynthesis; 2-hydroxy-3-oxobutyl phosphate from D-ribulose 5-phosphate: step 1/1. Its function is as follows. Catalyzes the conversion of D-ribulose 5-phosphate to formate and 3,4-dihydroxy-2-butanone 4-phosphate. This chain is 3,4-dihydroxy-2-butanone 4-phosphate synthase, found in Pseudomonas putida (strain ATCC 47054 / DSM 6125 / CFBP 8728 / NCIMB 11950 / KT2440).